The following is a 340-amino-acid chain: GTP 3',8-cyclase (340 aa).

The Radical SAM core domain maps to 8–227 (KLGRPIRDLR…SMIQEEFDIE (220 aa)). Arginine 17 lines the GTP pocket. Positions 24 and 28 each coordinate [4Fe-4S] cluster. Residue tyrosine 30 coordinates S-adenosyl-L-methionine. Residue cysteine 31 participates in [4Fe-4S] cluster binding. Residue arginine 71 coordinates GTP. Glycine 75 is a binding site for S-adenosyl-L-methionine. Threonine 102 lines the GTP pocket. Serine 126 is a binding site for S-adenosyl-L-methionine. Lysine 163 is a GTP binding site. An S-adenosyl-L-methionine-binding site is contributed by methionine 197. 2 residues coordinate [4Fe-4S] cluster: cysteine 261 and cysteine 264. 266-268 (RAR) serves as a coordination point for GTP. A [4Fe-4S] cluster-binding site is contributed by cysteine 278.

It belongs to the radical SAM superfamily. MoaA family. Monomer and homodimer. [4Fe-4S] cluster serves as cofactor.

The catalysed reaction is GTP + AH2 + S-adenosyl-L-methionine = (8S)-3',8-cyclo-7,8-dihydroguanosine 5'-triphosphate + 5'-deoxyadenosine + L-methionine + A + H(+). Its pathway is cofactor biosynthesis; molybdopterin biosynthesis. In terms of biological role, catalyzes the cyclization of GTP to (8S)-3',8-cyclo-7,8-dihydroguanosine 5'-triphosphate. This Staphylococcus carnosus (strain TM300) protein is GTP 3',8-cyclase.